The following is a 263-amino-acid chain: uncharacterized protein (263 aa).

The DOD-type homing endonuclease domain occupies 107–246 (ILGVLNGDGS…CCSFLEKLGI (140 aa)).

This is an uncharacterized protein from Methanocaldococcus jannaschii (strain ATCC 43067 / DSM 2661 / JAL-1 / JCM 10045 / NBRC 100440) (Methanococcus jannaschii).